A 272-amino-acid chain; its full sequence is Large ribosomal subunit protein uL2cz/uL2cy (272 aa).

2 disordered regions span residues 1–33 (MAIH…SGQR) and 220–272 (VMNP…RRSK). Ala2 carries the N-methylalanine modification. Positions 7 to 30 (KTSTSSTRNGAVQVKSNPRNNLIS) are enriched in polar residues.

The protein belongs to the universal ribosomal protein uL2 family. As to quaternary structure, component of the chloroplast large ribosomal subunit (LSU). Mature 70S chloroplast ribosomes of higher plants consist of a small (30S) and a large (50S) subunit. The 30S small subunit contains 1 molecule of ribosomal RNA (16S rRNA) and 24 different proteins. The 50S large subunit contains 3 rRNA molecules (23S, 5S and 4.5S rRNA) and 33 different proteins.

It is found in the plastid. The protein localises to the chloroplast. Functionally, component of the chloroplast ribosome (chloro-ribosome), a dedicated translation machinery responsible for the synthesis of chloroplast genome-encoded proteins, including proteins of the transcription and translation machinery and components of the photosynthetic apparatus. The chain is Large ribosomal subunit protein uL2cz/uL2cy (rpl2-A) from Spinacia oleracea (Spinach).